Consider the following 394-residue polypeptide: Elongation factor Tu (394 aa).

The 195-residue stretch at 10 to 204 folds into the tr-type G domain; that stretch reads KPHINVGTIG…ALDNYIPEPK (195 aa). The G1 stretch occupies residues 19-26; that stretch reads GHVDHGKT. 19–26 serves as a coordination point for GTP; that stretch reads GHVDHGKT. Thr26 is a Mg(2+) binding site. The interval 60–64 is G2; sequence GITIN. Residues 81 to 84 form a G3 region; that stretch reads DCPG. Residues 81-85 and 136-139 each bind GTP; these read DCPGH and NKCD. A G4 region spans residues 136–139; sequence NKCD. Residues 174 to 176 form a G5 region; sequence SAL.

Belongs to the TRAFAC class translation factor GTPase superfamily. Classic translation factor GTPase family. EF-Tu/EF-1A subfamily. Monomer.

The protein resides in the cytoplasm. The catalysed reaction is GTP + H2O = GDP + phosphate + H(+). Functionally, GTP hydrolase that promotes the GTP-dependent binding of aminoacyl-tRNA to the A-site of ribosomes during protein biosynthesis. The protein is Elongation factor Tu of Blochmanniella pennsylvanica (strain BPEN).